A 518-amino-acid polypeptide reads, in one-letter code: Ribonuclease Y (518 aa).

A helical transmembrane segment spans residues 2–22 (GSIIISALLALVIGAVVGFFV). In terms of domain architecture, KH spans 208 to 271 (TVSVVNLPND…ETARIALDKL (64 aa)). The region spanning 334-427 (VLKHSVEVAF…VAAADALSAA (94 aa)) is the HD domain.

This sequence belongs to the RNase Y family.

It localises to the cell membrane. Its function is as follows. Endoribonuclease that initiates mRNA decay. The chain is Ribonuclease Y from Geobacillus kaustophilus (strain HTA426).